Here is a 332-residue protein sequence, read N- to C-terminus: Adenosine deaminase (332 aa).

Zn(2+) is bound by residues H12 and H14. The substrate site is built by H14, D16, and G170. Zn(2+) is bound at residue H197. E200 functions as the Proton donor in the catalytic mechanism. D278 lines the Zn(2+) pocket. Substrate is bound at residue D279.

Belongs to the metallo-dependent hydrolases superfamily. Adenosine and AMP deaminases family. Adenosine deaminase subfamily. Zn(2+) is required as a cofactor.

The enzyme catalyses adenosine + H2O + H(+) = inosine + NH4(+). The catalysed reaction is 2'-deoxyadenosine + H2O + H(+) = 2'-deoxyinosine + NH4(+). Catalyzes the hydrolytic deamination of adenosine and 2-deoxyadenosine. The protein is Adenosine deaminase of Erwinia tasmaniensis (strain DSM 17950 / CFBP 7177 / CIP 109463 / NCPPB 4357 / Et1/99).